The following is a 1036-amino-acid chain: Beta-galactosidase (1036 aa).

The substrate site is built by N97 and D197. D197 serves as a coordination point for Na(+). E411, H413, and E456 together coordinate Mg(2+). Residues E456 and 532-535 (EYAH) contribute to the substrate site. E456 acts as the Proton donor in catalysis. E532 acts as the Nucleophile in catalysis. N592 provides a ligand contact to Mg(2+). Residues F596 and D599 each contribute to the Na(+) site. The substrate site is built by D599 and W1006.

This sequence belongs to the glycosyl hydrolase 2 family. Homotetramer. Mg(2+) is required as a cofactor. It depends on Na(+) as a cofactor.

The catalysed reaction is Hydrolysis of terminal non-reducing beta-D-galactose residues in beta-D-galactosides.. The protein is Beta-galactosidase of Leuconostoc mesenteroides subsp. mesenteroides (strain ATCC 8293 / DSM 20343 / BCRC 11652 / CCM 1803 / JCM 6124 / NCDO 523 / NBRC 100496 / NCIMB 8023 / NCTC 12954 / NRRL B-1118 / 37Y).